We begin with the raw amino-acid sequence, 231 residues long: NKG2-C type II integral membrane protein (231 aa).

The segment covering 1 to 12 has biased composition (polar residues); that stretch reads MNKQRGTFSEVS. Positions 1–31 are disordered; it reads MNKQRGTFSEVSLAQDPKRQQRKPKDNKSSI. The Cytoplasmic segment spans residues 1–70; that stretch reads MNKQRGTFSE…CQGLLPPPEK (70 aa). The segment covering 16 to 28 has biased composition (basic and acidic residues); that stretch reads DPKRQQRKPKDNK. A helical; Signal-anchor for type II membrane protein transmembrane segment spans residues 71–93; the sequence is LTAEVLGIICIVLMATVLKTVVL. Residues 94-231 are Extracellular-facing; that stretch reads IPFLEQNNSF…SKRYYCKHKL (138 aa). N-linked (GlcNAc...) asparagine glycosylation occurs at Asn100. A C-type lectin domain is found at 116-229; that stretch reads HCPEEWITYS…GSSKRYYCKH (114 aa). Disulfide bonds link Cys117–Cys128, Cys145–Cys227, and Cys206–Cys219. Asn149 carries N-linked (GlcNAc...) asparagine glycosylation.

In terms of assembly, heterodimer with KLRD1; disulfide-linked. KLRD1-KLRC2 receptor complex interacts with TYROBP/DAP12 homodimer; this interaction is necessary for the expression on the cell surface. In terms of tissue distribution, natural killer cells.

The protein resides in the cell membrane. Immune activating receptor involved in self-nonself discrimination. In complex with KLRD1 on cytotoxic lymphocyte subsets, recognizes non-classical major histocompatibility MHC-E loaded with signal sequence-derived peptides from non-classical MHC-G molecules, likely playing a role in the generation and effector functions of adaptive natural killer (NK) cells and in maternal-fetal tolerance during pregnancy. Regulates the effector functions of terminally differentiated cytotoxic lymphocyte subsets, and in particular may play a role in adaptive NK cell response to viral infection. Upon MHC-E-peptide binding, transmits intracellular signals via the adapter protein TYROBP/DAP12, triggering the phosphorylation of proximal signaling molecules and cell activation. The chain is NKG2-C type II integral membrane protein (KLRC2) from Macaca mulatta (Rhesus macaque).